A 652-amino-acid polypeptide reads, in one-letter code: Probable serine/threonine-protein kinase mkcD (652 aa).

Disordered stretches follow at residues methionine 1–lysine 47, asparagine 163–valine 198, and glutamine 257–proline 289. Residues asparagine 182 to aspartate 191 are compositionally biased toward gly residues. Positions lysine 231–glutamate 275 form a coiled coil. The span at glutamine 257–glutamine 271 shows a compositional bias: low complexity. Positions serine 279–proline 289 are enriched in polar residues. A Protein kinase domain is found at phenylalanine 369–leucine 626. Residues glutamate 375–valine 383 and lysine 403 contribute to the ATP site. The active-site Proton acceptor is the aspartate 494.

Belongs to the protein kinase superfamily. STE Ser/Thr protein kinase family. STE20 subfamily. It depends on Mg(2+) as a cofactor.

The catalysed reaction is L-seryl-[protein] + ATP = O-phospho-L-seryl-[protein] + ADP + H(+). It catalyses the reaction L-threonyl-[protein] + ATP = O-phospho-L-threonyl-[protein] + ADP + H(+). In Dictyostelium discoideum (Social amoeba), this protein is Probable serine/threonine-protein kinase mkcD.